The sequence spans 221 residues: Charged multivesicular body protein 3 (221 aa).

Gly2 carries the N-myristoyl glycine lipid modification. Residues 22-54 (KIRKEMRVIDRQIRDIQREEEKVKRSIKDAAKK) adopt a coiled-coil conformation. Important for autoinhibitory function stretches follow at residues 59-64 (VCIILA) and 168-169 (IL). Positions 144–221 (LEDTLEGMDD…MQSRLAALRS (78 aa)) form a coiled coil. Residues 181–221 (PSKVTDLPDPVAIGATAAPEEESEEEEEIEEMQSRLAALRS) form a disordered region. A compositionally biased stretch (acidic residues) spans 199–211 (PEEESEEEEEIEE). The short motif at 200 to 210 (EEESEEEEEIE) is the MIT-interacting motif element. Interaction with STAMBP stretches follow at residues 202 to 206 (ESEEE) and 220 to 221 (RS).

The protein belongs to the SNF7 family. As to quaternary structure, probable core component of the endosomal sorting required for transport complex III (ESCRT-III). ESCRT-III components are thought to multimerize to form a flat lattice on the perimeter membrane of the endosome. Several assembly forms of ESCRT-III may exist that interact and act sequentially.

The protein resides in the cytoplasm. It is found in the cytosol. It localises to the membrane. Its subcellular location is the endosome. The protein localises to the late endosome membrane. In terms of biological role, probable core component of the endosomal sorting required for transport complex III (ESCRT-III) which is involved in multivesicular bodies (MVBs) formation and sorting of endosomal cargo proteins into MVBs. MVBs contain intraluminal vesicles (ILVs) that are generated by invagination and scission from the limiting membrane of the endosome and mostly are delivered to lysosomes enabling degradation of membrane proteins, such as stimulated growth factor receptors, lysosomal enzymes and lipids. Involved in late stages of cytokinesis. Plays a role in endosomal sorting/trafficking of EGF receptor. In Danio rerio (Zebrafish), this protein is Charged multivesicular body protein 3 (chmp3).